We begin with the raw amino-acid sequence, 102 residues long: Large ribosomal subunit protein bL21 (102 aa).

Belongs to the bacterial ribosomal protein bL21 family. In terms of assembly, part of the 50S ribosomal subunit. Contacts protein L20.

In terms of biological role, this protein binds to 23S rRNA in the presence of protein L20. The polypeptide is Large ribosomal subunit protein bL21 (Latilactobacillus sakei subsp. sakei (strain 23K) (Lactobacillus sakei subsp. sakei)).